Here is a 435-residue protein sequence, read N- to C-terminus: CBL-interacting protein kinase 28 (435 aa).

Residues 11-265 (YVIGRQLGQG…ISRIKRSAWY (255 aa)) form the Protein kinase domain. Residues 17–25 (LGQGTFGKV) and Lys-40 each bind ATP. Asp-133 acts as the Proton acceptor in catalysis. The activation loop stretch occupies residues 151–180 (DFGLSALAESRRQDGLLHTACGTPAYVAPE). The region spanning 283–329 (CTSEAPFSGPTICISSERNQEPPNLHNLNAFDIISLSTGFDLSGLFG) is the NAF domain. The interval 334 to 363 (RRESLFTSRKPAAAVLVKLKELAKALNLKV) is PPI.

This sequence belongs to the protein kinase superfamily. CAMK Ser/Thr protein kinase family. SNF1 subfamily. Mn(2+) serves as cofactor.

It catalyses the reaction L-seryl-[protein] + ATP = O-phospho-L-seryl-[protein] + ADP + H(+). It carries out the reaction L-threonyl-[protein] + ATP = O-phospho-L-threonyl-[protein] + ADP + H(+). In terms of biological role, CIPK serine-threonine protein kinases interact with CBL proteins. Binding of a CBL protein to the regulatory NAF domain of CIPK protein lead to the activation of the kinase in a calcium-dependent manner. The protein is CBL-interacting protein kinase 28 (CIPK28) of Oryza sativa subsp. japonica (Rice).